We begin with the raw amino-acid sequence, 431 residues long: MVSLEKNDHLMLARQLPLKSVALILAGGRGTRLKDLTNKRAKPAVHFGGKFRIIDFALSNCINSGIRRMGVITQYQSHTLVQHIQRGWSFFNEEMNEFVDLLPAQQRMKGENWYRGTADAVTQNLDIIRRYKAEYVVILAGDHIYKQDYSRMLIDHVEKGARCTVACMPVPIEEASAFGVMAVDENDKIIEFVEKPANPPSMPNDPGKSLASMGIYVFDADYLYELLEEDDRDENSSHDFGKDLIPKITEAGLAYAHPFPLSCVQSDPDAEPYWRDVGTLEAYWKANLDLASVVPELDMYDRNWPIRTYNESLPPAKFVQDRSGSHGMTLNSLVSGGCVISGSVVVQSVLFSRVRVNSFCNIDSAVLLPEVWVGRSCRLRRCVIDRACVIPEGMVIGENAEEDARRFYRSEEGIVLVTREMLRKLGHKQER.

Lys-39 contributes to the beta-D-fructose 1,6-bisphosphate binding site. Positions 40, 46, and 52 each coordinate AMP. Tyr-114 lines the alpha-D-glucose 1-phosphate pocket. An AMP-binding site is contributed by Arg-130. Residues Gly-179, 194 to 195 (EK), and Ser-212 contribute to the alpha-D-glucose 1-phosphate site. Glu-370 and Arg-386 together coordinate AMP. Residues 419–423 (REMLR) and 429–431 (QER) contribute to the beta-D-fructose 1,6-bisphosphate site.

Belongs to the bacterial/plant glucose-1-phosphate adenylyltransferase family. In terms of assembly, homotetramer.

The enzyme catalyses alpha-D-glucose 1-phosphate + ATP + H(+) = ADP-alpha-D-glucose + diphosphate. It participates in glycan biosynthesis; glycogen biosynthesis. Allosterically activated by fructose-1,6-bisphosphate (F16BP) and inhibited by AMP. Its function is as follows. Involved in the biosynthesis of ADP-glucose, a building block required for the elongation reactions to produce glycogen. Catalyzes the reaction between ATP and alpha-D-glucose 1-phosphate (G1P) to produce pyrophosphate and ADP-Glc. This is Glucose-1-phosphate adenylyltransferase from Escherichia coli O45:K1 (strain S88 / ExPEC).